The following is a 115-amino-acid chain: MIFMKEIVAIIRPEKLEEVKNALEAAGCHGMTVTEVRGRGRQLGITESYRGRDYRIDLLPKTKIEIVVNDEDVDTVVETIVKSAQTGDIGDGKIFISGVDEVVRIRTGESGKKAV.

At Tyr54 the chain carries O-UMP-tyrosine.

Belongs to the P(II) protein family.

Functionally, could be involved in the regulation of nitrogen fixation. In Methanothermobacter thermautotrophicus (strain ATCC 29096 / DSM 1053 / JCM 10044 / NBRC 100330 / Delta H) (Methanobacterium thermoautotrophicum), this protein is Nitrogen regulatory protein P-II 2.